The following is a 181-amino-acid chain: Isopentenyl-diphosphate Delta-isomerase (181 aa).

Positions 25 and 32 each coordinate Mn(2+). The Nudix hydrolase domain maps to 30–164; that stretch reads PLHLAFSCWL…PWAFSPWMVM (135 aa). Cysteine 67 is a catalytic residue. Histidine 69 is a Mn(2+) binding site. Glutamate 87 is a binding site for Mg(2+). Mn(2+) contacts are provided by glutamate 114 and glutamate 116. Residue glutamate 116 is part of the active site.

Belongs to the IPP isomerase type 1 family. Homodimer. The cofactor is Mg(2+). Requires Mn(2+) as cofactor.

The protein localises to the cytoplasm. It catalyses the reaction isopentenyl diphosphate = dimethylallyl diphosphate. Its pathway is isoprenoid biosynthesis; dimethylallyl diphosphate biosynthesis; dimethylallyl diphosphate from isopentenyl diphosphate: step 1/1. Its function is as follows. Catalyzes the 1,3-allylic rearrangement of the homoallylic substrate isopentenyl (IPP) to its highly electrophilic allylic isomer, dimethylallyl diphosphate (DMAPP). This is Isopentenyl-diphosphate Delta-isomerase from Salmonella agona (strain SL483).